Here is a 155-residue protein sequence, read N- to C-terminus: SsrA-binding protein (155 aa).

Belongs to the SmpB family.

The protein resides in the cytoplasm. Functionally, required for rescue of stalled ribosomes mediated by trans-translation. Binds to transfer-messenger RNA (tmRNA), required for stable association of tmRNA with ribosomes. tmRNA and SmpB together mimic tRNA shape, replacing the anticodon stem-loop with SmpB. tmRNA is encoded by the ssrA gene; the 2 termini fold to resemble tRNA(Ala) and it encodes a 'tag peptide', a short internal open reading frame. During trans-translation Ala-aminoacylated tmRNA acts like a tRNA, entering the A-site of stalled ribosomes, displacing the stalled mRNA. The ribosome then switches to translate the ORF on the tmRNA; the nascent peptide is terminated with the 'tag peptide' encoded by the tmRNA and targeted for degradation. The ribosome is freed to recommence translation, which seems to be the essential function of trans-translation. This chain is SsrA-binding protein, found in Chelativorans sp. (strain BNC1).